We begin with the raw amino-acid sequence, 179 residues long: Large ribosomal subunit protein uL16 (179 aa).

Residues Lys147 to Ser179 are disordered. Residues Leu156–Thr168 show a composition bias toward acidic residues. Residues Ser169–Ser179 are compositionally biased toward polar residues.

Belongs to the universal ribosomal protein uL16 family. Part of the 50S ribosomal subunit.

Its function is as follows. Binds 23S rRNA and is also seen to make contacts with the A and possibly P site tRNAs. This Prochlorococcus marinus (strain MIT 9211) protein is Large ribosomal subunit protein uL16.